The primary structure comprises 54 residues: Protein GndA (54 aa).

Residues 28 to 50 (LFVVIVSFQQRALTSSVPVFLAV) traverse the membrane as a helical segment.

The protein resides in the cell inner membrane. In Escherichia coli (strain K12), this protein is Protein GndA.